Here is a 117-residue protein sequence, read N- to C-terminus: Large ribosomal subunit protein uL24 (117 aa).

Positions 1–12 (MSKKNSQTSPQR) are enriched in polar residues. Positions 1–20 (MSKKNSQTSPQRQKMHVKKG) are disordered.

Belongs to the universal ribosomal protein uL24 family. Part of the 50S ribosomal subunit.

One of two assembly initiator proteins, it binds directly to the 5'-end of the 23S rRNA, where it nucleates assembly of the 50S subunit. Its function is as follows. One of the proteins that surrounds the polypeptide exit tunnel on the outside of the subunit. The chain is Large ribosomal subunit protein uL24 from Microcystis aeruginosa (strain NIES-843 / IAM M-2473).